The primary structure comprises 370 residues: MKLNTLQLENYRNYDEVTLKCHPDVNILIGENAQGKTNLLESIYTLALAKSHRTSNDKELIRFNADYAKIEGELSYRHGTMPLTMFITKKGKQVKVNHLEQSRLTQYIGHLNVVLFAPEDLNIVKGSPQIRRRFIDMELGQISAVYLNDLAQYQRILKQKNNYLKQLQLGQKKDLTMLEVLNQQFAEYAMKVTDKRAHFIQELESLAKPIHAGITNDKEALSLNYLPSLKFDYAQNEAARLEEIMSILSDNMQREKERGISLFGPHRDDISFDVNGMDAQTYGSQGQQRTTALSIKLAEIELMNIEVGEYPILLLDDVLSELDDSRQTHLLSTIQHKVQTFVTTTSVDGIDHEIMNNPKLYRINQGEIIK.

Residue 30-37 (GENAQGKT) participates in ATP binding.

The protein belongs to the RecF family.

The protein localises to the cytoplasm. Functionally, the RecF protein is involved in DNA metabolism; it is required for DNA replication and normal SOS inducibility. RecF binds preferentially to single-stranded, linear DNA. It also seems to bind ATP. This chain is DNA replication and repair protein RecF, found in Staphylococcus aureus (strain USA300).